The chain runs to 332 residues: Ephrin-B2a (332 aa).

A signal peptide spans 1-24 (MGDSLWRYYFGVLVIACKVNLSRA). N20 and N33 each carry an N-linked (GlcNAc...) asparagine glycan. An Ephrin RBD domain is found at 25–161 (LILDSIYWNT…TKSMKIIMKV (137 aa)). At 25 to 225 (LILDSIYWNT…VIGSEVALFA (201 aa)) the chain is on the extracellular side. Cystine bridges form between C59–C98 and C86–C150. The N-linked (GlcNAc...) asparagine glycan is linked to N136. Residues 162–212 (GQNPSDPISPKDYPTSYPPKHPDLGGKDSKSNEVLKPDASPHGEDKGDGNK) form a disordered region. Over residues 181–210 (KHPDLGGKDSKSNEVLKPDASPHGEDKGDG) the composition is skewed to basic and acidic residues. N211 carries N-linked (GlcNAc...) asparagine glycosylation. The helical transmembrane segment at 226–246 (CIASASVIVIIIIIMLVFLLL) threads the bilayer. Residues 247–332 (KYRRRHRKHS…QSPANIYYKV (86 aa)) lie on the Cytoplasmic side of the membrane. Positions 255 to 285 (HSPQHATTLSLSTLATPKRGGSGGNNNGSEP) are disordered. The segment covering 260-270 (ATTLSLSTLAT) has biased composition (low complexity). A PDZ-binding motif is present at residues 330–332 (YKV).

The protein belongs to the ephrin family. In terms of assembly, binds to the receptor tyrosine kinase ephb4. In terms of processing, inducible phosphorylation of tyrosine residues in the cytoplasmic domain.

It localises to the cell membrane. In terms of biological role, cell surface transmembrane ligand for Eph receptors, a family of receptor tyrosine kinases which are crucial for migration, repulsion and adhesion during neuronal, vascular and epithelial development. Binds promiscuously Eph receptors residing on adjacent cells, leading to contact-dependent bidirectional signaling into neighboring cells. The signaling pathway downstream of the receptor is referred to as forward signaling while the signaling pathway downstream of the ephrin ligand is referred to as reverse signaling. Together with ephb4 may play a central role in heart morphogenesis and angiogenesis through regulation of cell adhesion and cell migration. This Danio rerio (Zebrafish) protein is Ephrin-B2a (efnb2a).